The primary structure comprises 540 residues: Chaperonin GroEL (540 aa).

Residues 30 to 33, Lys51, 87 to 91, Gly415, 479 to 481, and Asp495 each bind ATP; these read TLGP, DGTTT, and NAA.

Belongs to the chaperonin (HSP60) family. Forms a cylinder of 14 subunits composed of two heptameric rings stacked back-to-back. Interacts with the co-chaperonin GroES.

It is found in the cytoplasm. The catalysed reaction is ATP + H2O + a folded polypeptide = ADP + phosphate + an unfolded polypeptide.. Functionally, together with its co-chaperonin GroES, plays an essential role in assisting protein folding. The GroEL-GroES system forms a nano-cage that allows encapsulation of the non-native substrate proteins and provides a physical environment optimized to promote and accelerate protein folding. This chain is Chaperonin GroEL, found in Raoultella planticola (Klebsiella planticola).